The chain runs to 345 residues: NADPH dehydrogenase (345 aa).

23–26 (SPMC) is a binding site for FMN. Substrate is bound at residue Tyr-28. Ala-60 and Gln-102 together coordinate FMN. Position 164-167 (164-167 (HGAH)) interacts with substrate. FMN-binding positions include Arg-215 and 307 to 308 (GR).

The protein belongs to the NADH:flavin oxidoreductase/NADH oxidase family. NamA subfamily. Homotetramer. FMN is required as a cofactor.

The enzyme catalyses A + NADPH + H(+) = AH2 + NADP(+). In terms of biological role, catalyzes the reduction of the double bond of an array of alpha,beta-unsaturated aldehydes and ketones. It also reduces the nitro group of nitroester and nitroaromatic compounds. It could have a role in detoxification processes. The polypeptide is NADPH dehydrogenase (Bacillus cereus (strain G9842)).